Consider the following 828-residue polypeptide: Periplasmic nitrate reductase (828 aa).

The segment at residues 1–31 (MKLSRRSFMKANAVAAAAAAAGLSVPGVARA) is a signal peptide (tat-type signal). One can recognise a 4Fe-4S Mo/W bis-MGD-type domain in the interval 39–95 (IKWDKAPCRFCGTGCGVLVGTQQGRVVACQGDPDAPVNRGLNCIKGYFLPKIMYGKD). Cys-46, Cys-49, Cys-53, and Cys-81 together coordinate [4Fe-4S] cluster. Mo-bis(molybdopterin guanine dinucleotide) is bound by residues Lys-83, Gln-150, Asn-175, Cys-179, 212-219 (WGANMAEM), 243-247 (STYQH), 262-264 (QSD), Met-372, Gln-376, Asn-482, 508-509 (SD), Lys-531, Asp-558, and 718-727 (TGRVLEHWHT). Substrate is bound at residue Phe-794. Positions 802 and 819 each coordinate Mo-bis(molybdopterin guanine dinucleotide).

Belongs to the prokaryotic molybdopterin-containing oxidoreductase family. NasA/NapA/NarB subfamily. In terms of assembly, component of the periplasmic nitrate reductase NapAB complex composed of NapA and NapB. [4Fe-4S] cluster is required as a cofactor. The cofactor is Mo-bis(molybdopterin guanine dinucleotide). Post-translationally, predicted to be exported by the Tat system. The position of the signal peptide cleavage has not been experimentally proven.

The protein resides in the periplasm. The enzyme catalyses 2 Fe(II)-[cytochrome] + nitrate + 2 H(+) = 2 Fe(III)-[cytochrome] + nitrite + H2O. Its function is as follows. Catalytic subunit of the periplasmic nitrate reductase complex NapAB. Receives electrons from NapB and catalyzes the reduction of nitrate to nitrite. This Escherichia coli O8 (strain IAI1) protein is Periplasmic nitrate reductase.